A 73-amino-acid chain; its full sequence is uncharacterized protein (73 aa).

The HTH deoR-type domain maps to 8-63 (MLTRIKSVYMFIQEKGLVTTQELVDEFGITPRTIQRDLNVLAYNDLVHSPSRGKWE). Positions 25–44 (VTTQELVDEFGITPRTIQRD) form a DNA-binding region, H-T-H motif.

This is an uncharacterized protein from Bacillus subtilis (strain 168).